The chain runs to 193 residues: uncharacterized protein (193 aa).

Arginine 8 contacts substrate. The Tele-phosphohistidine intermediate role is filled by histidine 9. 3 residues coordinate substrate: asparagine 15, glutamine 21, and arginine 58. Glutamate 82 acts as the Proton donor/acceptor in catalysis. Histidine 139 is a substrate binding site.

Belongs to the phosphoglycerate mutase family. GpmB subfamily.

Phosphatase with broad substrate specificity. Does not have phosphoglycerate mutase activity. This is an uncharacterized protein from Bacillus subtilis (strain 168).